Here is a 166-residue protein sequence, read N- to C-terminus: MASGVAVSDGVIKVFNDMKVRKSSTPEEVKKRKKAVLFCLSEDKKNIILEEGKEILVGDVGQTVDDPYATFVKMLPDKDCRYALYDATYETKESKKEDLVFIFWAPESAPLKSKMIYASSKDAIKKKLTGIKHELQANCYEEVKDRCTLAEKLGGSAVISLEGKPL.

A2 carries the N-acetylalanine modification. A Phosphoserine; by NRK modification is found at S3. Positions 4–153 (GVAVSDGVIK…KDRCTLAEKL (150 aa)) constitute an ADF-H domain. S8 carries the phosphoserine modification. Residue K13 is modified to N6-acetyllysine. T25 is subject to Phosphothreonine. The Nuclear localization signal motif lies at 30-34 (KKRKK). The residue at position 41 (S41) is a Phosphoserine. A Phosphothreonine modification is found at T63. Y68 bears the Phosphotyrosine mark. K73 is subject to N6-acetyllysine. Residue Y82 is modified to Phosphotyrosine. A Phosphoserine modification is found at S108. A Glycyl lysine isopeptide (Lys-Gly) (interchain with G-Cter in SUMO2) cross-link involves residue K132. The residue at position 140 (Y140) is a Phosphotyrosine. The residue at position 144 (K144) is an N6-acetyllysine. Phosphoserine is present on S156.

This sequence belongs to the actin-binding proteins ADF family. Can bind G- and F-actin in a 1:1 ratio of cofilin to actin. It is a major component of intranuclear and cytoplasmic actin rods. Interacts with the subcortical maternal complex (SCMC) via interaction with TLE6 isoform 1 and NLRP5. Interacts with C9orf72. In terms of assembly, (Microbial infection) Interacts with human respiratory syncytial virus (HRSV) matrix protein; this interaction probably facilitates viral replication. Inactivated by phosphorylation on Ser-3. Phosphorylated on Ser-3 in resting cells. Dephosphorylated by PDXP/chronophin; this restores its activity in promoting actin filament depolymerization. The phosphorylation of Ser-24 may prevent recognition of the nuclear localization signal. Phosphorylated via a ARRB1-RAC1-LIMK1-PAK1 cascade upon active ligand stimulation of atypical chemokine receptor ACKR2. Widely distributed in various tissues.

The protein resides in the nucleus matrix. Its subcellular location is the cytoplasm. It localises to the cytoskeleton. The protein localises to the cell projection. It is found in the ruffle membrane. The protein resides in the lamellipodium membrane. Its subcellular location is the lamellipodium. It localises to the growth cone. The protein localises to the axon. Binds to F-actin and exhibits pH-sensitive F-actin depolymerizing activity. In conjunction with the subcortical maternal complex (SCMC), plays an essential role for zygotes to progress beyond the first embryonic cell divisions via regulation of actin dynamics. Required for the centralization of the mitotic spindle and symmetric division of zygotes. Plays a role in the regulation of cell morphology and cytoskeletal organization in epithelial cells. Required for the up-regulation of atypical chemokine receptor ACKR2 from endosomal compartment to cell membrane, increasing its efficiency in chemokine uptake and degradation. Required for neural tube morphogenesis and neural crest cell migration. The chain is Cofilin-1 (CFL1) from Homo sapiens (Human).